The sequence spans 335 residues: MYSLIRKCLFLMDAETAHNFSIQALKLAGKLPINVLPMPLNPVEVMGLQFKNPIGLAAGADKNGEAIDGFGKLGFGFIEVGTVTPVAQDGNPKPRQFRILEAEGIINRNGFNNLGVDVLVENVKKAKYDGIIGINIGKNAVTPIERALDDYQICLRKVYEHADYITVNISSPNTKNLRTLQYGEALDDLLRSLKSEQESLSQKFNRYKPLVLKIAPDLTDEEIASVADGLVRHKIDGVIAGNTTLSRDPVVGLKNAEHQGGLSGNPLNTLSTRLISTLAKELNGALPIIGSGGIHSVASGQEKIDAGASLLQVYSAMIYQGPALIQNLAKHIQVR.

Residues Ala-58–Lys-62 and Thr-82 contribute to the FMN site. Lys-62 serves as a coordination point for substrate. Position 107-111 (Asn-107–Phe-111) interacts with substrate. FMN-binding residues include Asn-135 and Asn-168. A substrate-binding site is contributed by Asn-168. Ser-171 functions as the Nucleophile in the catalytic mechanism. Asn-173 lines the substrate pocket. Lys-213 and Gly-241 together coordinate FMN. Residue Asn-242–Thr-243 participates in substrate binding. FMN is bound by residues Gly-264, Gly-293, and Tyr-314–Ser-315.

The protein belongs to the dihydroorotate dehydrogenase family. Type 2 subfamily. In terms of assembly, monomer. Requires FMN as cofactor.

The protein resides in the cell membrane. It carries out the reaction (S)-dihydroorotate + a quinone = orotate + a quinol. It participates in pyrimidine metabolism; UMP biosynthesis via de novo pathway; orotate from (S)-dihydroorotate (quinone route): step 1/1. Catalyzes the conversion of dihydroorotate to orotate with quinone as electron acceptor. The chain is Dihydroorotate dehydrogenase (quinone) from Actinobacillus pleuropneumoniae serotype 3 (strain JL03).